A 693-amino-acid polypeptide reads, in one-letter code: CREB-regulated transcription coactivator 2 (693 aa).

The segment covering 1–20 has biased composition (polar residues); sequence MATSGANGPGSATASASNPR. Residues 1–30 are disordered; sequence MATSGANGPGSATASASNPRKFSEKIALQK. Residue Ala-2 is modified to N-acetylalanine. Arg-51 is subject to Asymmetric dimethylarginine; by PRMT6. Phosphoserine is present on residues Ser-70, Ser-86, and Ser-90. Asymmetric dimethylarginine; by PRMT6 occurs at positions 99, 120, and 123. Ser-136 is subject to Phosphoserine. Residues Arg-161 and Arg-168 each carry the asymmetric dimethylarginine; by PRMT6 modification. Thr-169 carries the post-translational modification Phosphothreonine. Ser-171 bears the Phosphoserine; by AMPK, MARK2, SIK1 and SIK2 mark. Thr-192 is modified (phosphothreonine). A Glycyl lysine isopeptide (Lys-Gly) (interchain with G-Cter in SUMO2) cross-link involves residue Lys-234. Positions 271–287 match the Nuclear export signal motif; that stretch reads TGGSLPDLTNLHFPPPL. Position 274 is a phosphoserine; by MARK2 (Ser-274). Disordered regions lie at residues 282-306 and 328-554; these read HFPPPLPTPLDPEETAYPSLSGGNS and GYDA…MSDF. Ser-306, Ser-368, Ser-393, Ser-433, and Ser-456 each carry phosphoserine. Composition is skewed to low complexity over residues 331–378 and 386–415; these read APGL…SSLA and SLGHPSLSAPALSSSSSSSSTSSPVLGAPS. The span at 447 to 468 shows a compositional bias: polar residues; sequence SQQQLPKQFSPTMSPTLSSITQ. Tyr-488 carries the phosphotyrosine modification. Residues Ser-489, Ser-490, and Ser-492 each carry the phosphoserine modification. Residues 498–507 show a composition bias toward polar residues; it reads QPHTPKSLQQ. Thr-501 carries the phosphothreonine modification. Low complexity predominate over residues 509 to 529; the sequence is GLPSQSCSVQSSGGQPPGRQS. A phosphoserine mark is found at Ser-613, Ser-623, and Ser-624.

Belongs to the TORC family. Binds, as a tetramer, through its N-terminal region, with the bZIP domain of CREB1. 'Arg-314' in the bZIP domain of CREB1 is essential for this interaction. Interaction, via its C-terminal, with TAF4, enhances recruitment of TAF4 to CREB1. Interacts with SIK2. Interacts with 14-3-3 proteins, YWHAB and YWHAG. Interacts (probably when phosphorylated at Ser-171) with YWHAE. Interacts with calmodulin-dependent catalytic subunit PPP3CA/calcineurin A. Interaction with COP1 mediates nuclear export and degradation of CRTC2. As to quaternary structure, (Microbial infection) Interaction with the human T-cell leukemia virus type 1 (HTLV-1) Tax protein is essential for optimal transcription activation by Tax. In terms of processing, phosphorylation/dephosphorylation states of Ser-171 are required for regulating transduction of CREB activity. CRTCs/TORCs are inactive when phosphorylated, and active when dephosphorylated at this site. This primary site of phosphorylation, is regulated by cAMP and calcium levels and is dependent on the phosphorylation of SIKs (SIK1 and SIK2) by LKB1. Following adenylyl cyclase activation, dephosphorylated at Ser-171 by PPP3CA/calcineurin A resulting in CRTC2 dissociation from 14-3-3 proteins and PPP3CA. Both insulin and AMPK increase this phosphorylation of CRTC2 while glucagon suppresses it. Phosphorylation at Ser-274 by MARK2 is induced under low glucose conditions and dephosphorylated in response to glucose influx. Phosphorylation at Ser-274 promotes interaction with 14-3-3 proteins and translocation to the cytoplasm. Asymmetric dimethylation of arginine resisues by PRMT6 enhances the association of CRTC2 with CREB on the promoters of gluconeogenic genes. As to expression, most abundantly expressed in the thymus. Present in both B and T-lymphocytes. Highly expressed in HEK293T cells and in insulinomas. High levels also in spleen, ovary, muscle and lung, with highest levels in muscle. Lower levels found in brain, colon, heart, kidney, prostate, small intestine and stomach. Weak expression in liver and pancreas.

It localises to the cytoplasm. Its subcellular location is the nucleus. Functionally, transcriptional coactivator for CREB1 which activates transcription through both consensus and variant cAMP response element (CRE) sites. Acts as a coactivator, in the SIK/TORC signaling pathway, being active when dephosphorylated and acts independently of CREB1 'Ser-133' phosphorylation. Enhances the interaction of CREB1 with TAF4. Regulates gluconeogenesis as a component of the LKB1/AMPK/TORC2 signaling pathway. Regulates the expression of specific genes such as the steroidogenic gene, StAR. Potent coactivator of PPARGC1A and inducer of mitochondrial biogenesis in muscle cells. Also coactivator for TAX activation of the human T-cell leukemia virus type 1 (HTLV-1) long terminal repeats (LTR). The chain is CREB-regulated transcription coactivator 2 (CRTC2) from Homo sapiens (Human).